The primary structure comprises 163 residues: Transcription elongation factor GreB (163 aa).

It belongs to the GreA/GreB family. GreB subfamily.

Necessary for efficient RNA polymerase transcription elongation past template-encoded arresting sites. The arresting sites in DNA have the property of trapping a certain fraction of elongating RNA polymerases that pass through, resulting in locked ternary complexes. Cleavage of the nascent transcript by cleavage factors such as GreA or GreB allows the resumption of elongation from the new 3'terminus. GreB releases sequences of up to 9 nucleotides in length. The protein is Transcription elongation factor GreB of Vibrio parahaemolyticus serotype O3:K6 (strain RIMD 2210633).